The sequence spans 130 residues: Small ribosomal subunit protein uS9 (130 aa).

It belongs to the universal ribosomal protein uS9 family.

This Cupriavidus taiwanensis (strain DSM 17343 / BCRC 17206 / CCUG 44338 / CIP 107171 / LMG 19424 / R1) (Ralstonia taiwanensis (strain LMG 19424)) protein is Small ribosomal subunit protein uS9.